A 126-amino-acid polypeptide reads, in one-letter code: 3-isopropylmalate dehydrogenase (126 aa).

Positions 14 and 18 each coordinate Mg(2+). Residue 48–60 participates in NAD(+) binding; it reads GSAPDIAGKNIAN.

This sequence belongs to the isocitrate and isopropylmalate dehydrogenases family. LeuB type 1 subfamily. In terms of assembly, homodimer. The cofactor is Mg(2+). Requires Mn(2+) as cofactor.

The protein resides in the cytoplasm. The enzyme catalyses (2R,3S)-3-isopropylmalate + NAD(+) = 4-methyl-2-oxopentanoate + CO2 + NADH. It participates in amino-acid biosynthesis; L-leucine biosynthesis; L-leucine from 3-methyl-2-oxobutanoate: step 3/4. In terms of biological role, catalyzes the oxidation of 3-carboxy-2-hydroxy-4-methylpentanoate (3-isopropylmalate) to 3-carboxy-4-methyl-2-oxopentanoate. The product decarboxylates to 4-methyl-2 oxopentanoate. This chain is 3-isopropylmalate dehydrogenase (leuB), found in Buchnera aphidicola subsp. Uroleucon rurale.